The following is a 52-amino-acid chain: Insulin-2 (52 aa).

Intrachain disulfides connect Cys7–Cys38, Cys19–Cys51, and Cys37–Cys42.

This sequence belongs to the insulin family. In terms of assembly, heterodimer of a B chain and an A chain linked by two disulfide bonds.

The protein localises to the secreted. Insulin decreases blood glucose concentration. It increases cell permeability to monosaccharides, amino acids and fatty acids. It accelerates glycolysis, the pentose phosphate cycle, and glycogen synthesis in liver. The chain is Insulin-2 from Huso dauricus (Kaluga sturgeon).